A 125-amino-acid polypeptide reads, in one-letter code: U11-myrmicitoxin-Ta1a (125 aa).

The signal sequence occupies residues 1-21 (MKTVIFILGFAFVAILIPTNG). The propeptide occupies 22 to 91 (ESMADADAMA…RAMAAAYAAA (70 aa)). A disulfide bridge connects residues C101 and C124.

This sequence belongs to the formicidae venom precursor-01 superfamily. Expressed by the venom gland.

Its subcellular location is the secreted. The protein resides in the target cell membrane. In terms of biological role, neurotoxin that causes irreversible rapid flaccid paralysis in blowflies and honeybees upon intrathoracic injection. Causes a quick and irreversible cytolytic effect (at 10 uM) indicating it possibly acts as a pore-forming peptide. Shows only weak effect on aphids (A.pisum) at high doses 24 hours post intrathoracic injection. In vitro, is not cytotoxic on the dipteran S2 Drosophila embryonic cell line. The protein is U11-myrmicitoxin-Ta1a of Tetramorium africanum (Fierce ant).